The following is a 134-amino-acid chain: Profilin-2 (134 aa).

Residues cysteine 13 and cysteine 118 are joined by a disulfide bond. The short motif at 84 to 100 is the Involved in PIP2 interaction element; it reads AVIRGKKGSGGITIKKT. Threonine 114 is modified (phosphothreonine).

Belongs to the profilin family. As to quaternary structure, occurs in many kinds of cells as a complex with monomeric actin in a 1:1 ratio. In terms of processing, phosphorylated by MAP kinases.

It is found in the cytoplasm. The protein resides in the cytoskeleton. Functionally, binds to actin and affects the structure of the cytoskeleton. At high concentrations, profilin prevents the polymerization of actin, whereas it enhances it at low concentrations. In Olea europaea (Common olive), this protein is Profilin-2.